Here is a 178-residue protein sequence, read N- to C-terminus: Caveolin-1 (178 aa).

Position 2 is an N-acetylserine (serine 2). Position 2 is a phosphoserine (serine 2). The required for homooligomerization stretch occupies residues 2 to 94; the sequence is SGGKYVDSEG…WKASFTTFTV (93 aa). Residues 2–104 are Cytoplasmic-facing; the sequence is SGGKYVDSEG…TKYWFYRLLS (103 aa). Lysine 5 is subject to N6-acetyllysine; alternate. Residue lysine 5 forms a Glycyl lysine isopeptide (Lys-Gly) (interchain with G-Cter in ubiquitin); alternate linkage. Phosphotyrosine is present on tyrosine 6. Serine 9 carries the post-translational modification Phosphoserine. At tyrosine 14 the chain carries Phosphotyrosine; by ABL1. At tyrosine 25 the chain carries Phosphotyrosine. Residues lysine 26, lysine 30, lysine 39, lysine 47, and lysine 57 each participate in a glycyl lysine isopeptide (Lys-Gly) (interchain with G-Cter in ubiquitin) cross-link. The interaction with CAVIN3 stretch occupies residues 82–94; sequence DGIWKASFTTFTV. An intramembrane region (helical) is located at residues 105–125; that stretch reads ALFGIPMALIWGIYFAILSFL. Topologically, residues 126–178 are cytoplasmic; it reads HIWAVVPCIKSFLIEIQCISRVYSIYVHTFCDPLFEAIGKIFSNIRINTQKEI. The tract at residues 131–142 is interacts with SPRY1, SPRY2, SPRY3 and SPRY4; sequence VPCIKSFLIEIQ. 3 S-palmitoyl cysteine lipidation sites follow: cysteine 133, cysteine 143, and cysteine 156. Positions 149–160 are interacts with SPRY1, SPRY2, and SPRY4; sequence SIYVHTFCDPLF. An interacts with SPRY1, SPRY2, SPRY3 and SPRY4 region spans residues 167–178; that stretch reads FSNIRINTQKEI.

Belongs to the caveolin family. Homooligomer. Interacts with GLIPR2. Interacts with NOSTRIN. Interacts with SNAP25 and STX1A. Interacts (via the N-terminus) with DPP4; the interaction is direct. Interacts with CTNNB1, CDH1 and JUP. Interacts with PACSIN2; this interaction induces membrane tubulation. Interacts with SLC7A9. Interacts with BMX and BTK. Interacts with TGFBR1. Interacts with CAVIN3 (via leucine-zipper domain) in a cholesterol-sensitive manner. Interacts with CAVIN1. Interacts with EHD2 in a cholesterol-dependent manner. Forms a ternary complex with UBXN6 and VCP; mediates CAV1 targeting to lysosomes for degradation. Interacts with ABCG1; this interaction regulates ABCG1-mediated cholesterol efflux. Interacts with NEU3; this interaction enhances NEU3 sialidase activity within caveola. Interacts (via C-terminus) with SPRY1, SPRY2 (via C-terminus), SPRY3, and SPRY4. Interacts with IGFBP5; this interaction allows trafficking of IGFBP5 from the plasma membrane to the nucleus. In terms of processing, phosphorylated at Tyr-14 by ABL1 in response to oxidative stress. Post-translationally, ubiquitinated. Undergo monoubiquitination and multi- and/or polyubiquitination. Monoubiquitination of N-terminal lysines promotes integration in a ternary complex with UBXN6 and VCP which promotes oligomeric CAV1 targeting to lysosomes for degradation. Ubiquitinated by ZNRF1; leading to degradation and modulation of the TLR4-mediated immune response.

The protein localises to the golgi apparatus membrane. Its subcellular location is the cell membrane. It is found in the membrane. It localises to the caveola. The protein resides in the membrane raft. Functionally, may act as a scaffolding protein within caveolar membranes. Forms a stable heterooligomeric complex with CAV2 that targets to lipid rafts and drives caveolae formation. Mediates the recruitment of CAVIN proteins (CAVIN1/2/3/4) to the caveolae. Interacts directly with G-protein alpha subunits and can functionally regulate their activity. Involved in the costimulatory signal essential for T-cell receptor (TCR)-mediated T-cell activation. Its binding to DPP4 induces T-cell proliferation and NF-kappa-B activation in a T-cell receptor/CD3-dependent manner. Recruits CTNNB1 to caveolar membranes and may regulate CTNNB1-mediated signaling through the Wnt pathway. Negatively regulates TGFB1-mediated activation of SMAD2/3 by mediating the internalization of TGFBR1 from membrane rafts leading to its subsequent degradation. Binds 20(S)-hydroxycholesterol (20(S)-OHC). This chain is Caveolin-1 (CAV1), found in Bos taurus (Bovine).